Reading from the N-terminus, the 91-residue chain is Small ribosomal subunit protein bS16 (91 aa).

The protein belongs to the bacterial ribosomal protein bS16 family.

The chain is Small ribosomal subunit protein bS16 from Staphylococcus aureus (strain Mu3 / ATCC 700698).